The chain runs to 911 residues: Alpha-actinin-4 (911 aa).

Positions 1 to 30 (MVDYHAASQSYQYGPSSAGNGAGGGGSMGD) are disordered. An actin-binding region spans residues 1-269 (MVDYHAASQS…YVSSFYHAFS (269 aa)). Residues 12–26 (QYGPSSAGNGAGGGG) are interaction with VCL. The residue at position 31 (tyrosine 31) is a Phosphotyrosine. The tract at residues 40-61 (RDLLLDPAWEKQQRKTFTAWCN) is interaction with VCL. Calponin-homology (CH) domains lie at 50 to 154 (KQQR…LRFA) and 163 to 269 (TSAK…HAFS). Residues 84–88 (LMLLL) carry the LXXLL motif motif. The segment at 108-126 (KINNVNKALDFIASKGVKL) is interaction with VCL. At lysine 114 the chain carries N6-acetyllysine. The tract at residues 177-192 (TAPYKNVNVQNFHISW) is polyphosphoinositide (PIP2)-binding. The residue at position 214 (lysine 214) is an N6-acetyllysine. Threonine 249 bears the Phosphothreonine mark. Spectrin repeat units lie at residues 293 to 403 (HLME…WLLN), 413 to 518 (HLAE…ALEK), 528 to 639 (QLHL…ALLE), and 649 to 752 (HLRR…EVEN). An N6-acetyllysine mark is found at lysine 592 and lysine 625. Serine 696 carries the post-translational modification Phosphoserine. The segment at 736–911 (WEQLLTTIAR…STALYGESDL (176 aa)) is mediates interaction with MICALL2. EF-hand domains follow at residues 765–800 (EQMQEFRASFNHFDKDHGGALGPEEFKACLISLGYD) and 806–841 (QGEAEFNRIMSLVDPNHSGLVTFQAFIDFMSRETTD). Aspartate 778 serves as a coordination point for Ca(2+). Lysine 779 carries the post-translational modification N6-acetyllysine. Ca(2+) is bound by residues aspartate 780 and glutamate 789. Lysine 859 is subject to N6-acetyllysine. Serine 909 carries the post-translational modification Phosphoserine.

It belongs to the alpha-actinin family. In terms of assembly, homodimer; antiparallel. Identified in a IGF2BP1-dependent mRNP granule complex containing untranslated mRNAs. Component of the CART complex, at least composed of ACTN4, HGS/HRS, MYO5B and TRIM3. Binds TRIM3 at the N-terminus. Interacts with MAGI1. Interacts with PDLIM2. Identified in a complex with CASK, IQGAP1, MAGI2, NPHS1, SPTAN1 and SPTBN1. Interacts with MICALL2 (preferentially in opened conformation); stimulated by RAB13 activation. Interacts with PPARG and RARA. Binds to VCL; this interaction triggers VCL conformational changes. Interacts with SEPTIN14. Interacts with IGSF8.

It localises to the nucleus. The protein resides in the cytoplasm. It is found in the cell junction. The protein localises to the cytoskeleton. Its subcellular location is the stress fiber. It localises to the perinuclear region. In terms of biological role, F-actin cross-linking protein which is thought to anchor actin to a variety of intracellular structures. This is a bundling protein. Probably involved in vesicular trafficking via its association with the CART complex. The CART complex is necessary for efficient transferrin receptor recycling but not for EGFR degradation. Involved in tight junction assembly in epithelial cells probably through interaction with MICALL2. Links MICALL2 to the actin cytoskeleton and recruits it to the tight junctions. May also function as a transcriptional coactivator, stimulating transcription mediated by the nuclear hormone receptors PPARG and RARA. Association with IGSF8 regulates the immune synapse formation and is required for efficient T-cell activation. The sequence is that of Alpha-actinin-4 from Pongo abelii (Sumatran orangutan).